The primary structure comprises 154 residues: Small ribosomal subunit protein bS16 (154 aa).

Positions 82-154 are disordered; the sequence is VQERAARSNP…EAAAEESTEA (73 aa). A compositionally biased stretch (basic and acidic residues) spans 92–109; it reads KKAEPGEKAKERAEERAA. A compositionally biased stretch (low complexity) spans 110–129; it reads KLAAAEEAANAPAEEPAAEP. The span at 142–154 shows a compositional bias: acidic residues; that stretch reads PAEEAAAEESTEA.

The protein belongs to the bacterial ribosomal protein bS16 family.

In Rhizorhabdus wittichii (strain DSM 6014 / CCUG 31198 / JCM 15750 / NBRC 105917 / EY 4224 / RW1) (Sphingomonas wittichii), this protein is Small ribosomal subunit protein bS16.